Here is a 511-residue protein sequence, read N- to C-terminus: Bifunctional purine biosynthesis protein PurH (511 aa).

Residues 1 to 144 form the MGS-like domain; the sequence is MKTALLSVSD…KNFASVLPVV (144 aa).

Belongs to the PurH family.

The catalysed reaction is (6R)-10-formyltetrahydrofolate + 5-amino-1-(5-phospho-beta-D-ribosyl)imidazole-4-carboxamide = 5-formamido-1-(5-phospho-D-ribosyl)imidazole-4-carboxamide + (6S)-5,6,7,8-tetrahydrofolate. It carries out the reaction IMP + H2O = 5-formamido-1-(5-phospho-D-ribosyl)imidazole-4-carboxamide. It functions in the pathway purine metabolism; IMP biosynthesis via de novo pathway; 5-formamido-1-(5-phospho-D-ribosyl)imidazole-4-carboxamide from 5-amino-1-(5-phospho-D-ribosyl)imidazole-4-carboxamide (10-formyl THF route): step 1/1. Its pathway is purine metabolism; IMP biosynthesis via de novo pathway; IMP from 5-formamido-1-(5-phospho-D-ribosyl)imidazole-4-carboxamide: step 1/1. The protein is Bifunctional purine biosynthesis protein PurH of Pediococcus pentosaceus (strain ATCC 25745 / CCUG 21536 / LMG 10740 / 183-1w).